The following is a 262-amino-acid chain: MTRIHPTAIVEPGAQIDESVEIGPYAIVGPHVTIGARTTIGSHSVIEGHTTLGEDNRIGHYASVGGRPQDMKYKDEPTKLVIGNRNTIREFTTIHTGTVQDVGVTTLGDDNWIMAYVHIGHDCRVGNNVILSSNAQMAGHVEIGDYAIIGGMSGVHQFVRIGAHSMLGGASALVQDVPPFVIAAGNKAEPHGINVEGLRRRGFSPDAISALRSAYRLLYKNGLSLEEAKVQLRELAVAGGEGDAAVTAFVEFIDASQRGIIR.

This sequence belongs to the transferase hexapeptide repeat family. LpxA subfamily. As to quaternary structure, homotrimer.

It localises to the cytoplasm. The enzyme catalyses a (3R)-hydroxyacyl-[ACP] + UDP-N-acetyl-alpha-D-glucosamine = a UDP-3-O-[(3R)-3-hydroxyacyl]-N-acetyl-alpha-D-glucosamine + holo-[ACP]. It functions in the pathway glycolipid biosynthesis; lipid IV(A) biosynthesis; lipid IV(A) from (3R)-3-hydroxytetradecanoyl-[acyl-carrier-protein] and UDP-N-acetyl-alpha-D-glucosamine: step 1/6. Functionally, involved in the biosynthesis of lipid A, a phosphorylated glycolipid that anchors the lipopolysaccharide to the outer membrane of the cell. This Burkholderia ambifaria (strain MC40-6) protein is Acyl-[acyl-carrier-protein]--UDP-N-acetylglucosamine O-acyltransferase.